The chain runs to 338 residues: Tagatose 1,6-diphosphate aldolase (338 aa).

This sequence belongs to the aldolase LacD family.

The catalysed reaction is D-tagatofuranose 1,6-bisphosphate = D-glyceraldehyde 3-phosphate + dihydroxyacetone phosphate. The protein operates within carbohydrate metabolism; D-tagatose 6-phosphate degradation; D-glyceraldehyde 3-phosphate and glycerone phosphate from D-tagatose 6-phosphate: step 2/2. This is Tagatose 1,6-diphosphate aldolase from Listeria innocua serovar 6a (strain ATCC BAA-680 / CLIP 11262).